The following is a 242-amino-acid chain: Proteasome subunit alpha (242 aa).

The protein belongs to the peptidase T1A family. In terms of assembly, the 20S proteasome core is composed of 14 alpha and 14 beta subunits that assemble into four stacked heptameric rings, resulting in a barrel-shaped structure. The two inner rings, each composed of seven catalytic beta subunits, are sandwiched by two outer rings, each composed of seven alpha subunits. The catalytic chamber with the active sites is on the inside of the barrel. Has a gated structure, the ends of the cylinder being occluded by the N-termini of the alpha-subunits. Is capped at one or both ends by the proteasome regulatory ATPase, PAN.

Its subcellular location is the cytoplasm. Its activity is regulated as follows. The formation of the proteasomal ATPase PAN-20S proteasome complex, via the docking of the C-termini of PAN into the intersubunit pockets in the alpha-rings, triggers opening of the gate for substrate entry. Interconversion between the open-gate and close-gate conformations leads to a dynamic regulation of the 20S proteasome proteolysis activity. Component of the proteasome core, a large protease complex with broad specificity involved in protein degradation. This Sulfolobus acidocaldarius (strain ATCC 33909 / DSM 639 / JCM 8929 / NBRC 15157 / NCIMB 11770) protein is Proteasome subunit alpha.